The following is a 172-amino-acid chain: Large ribosomal subunit protein uL10 (172 aa).

The protein belongs to the universal ribosomal protein uL10 family. Part of the ribosomal stalk of the 50S ribosomal subunit. The N-terminus interacts with L11 and the large rRNA to form the base of the stalk. The C-terminus forms an elongated spine to which L12 dimers bind in a sequential fashion forming a multimeric L10(L12)X complex.

Functionally, forms part of the ribosomal stalk, playing a central role in the interaction of the ribosome with GTP-bound translation factors. The sequence is that of Large ribosomal subunit protein uL10 from Francisella tularensis subsp. tularensis (strain FSC 198).